A 177-amino-acid polypeptide reads, in one-letter code: Large ribosomal subunit protein uL6 (177 aa).

The interval 155–177 is disordered; sequence EPYKGKGVKHADERIFRKEGKKK.

Belongs to the universal ribosomal protein uL6 family. As to quaternary structure, part of the 50S ribosomal subunit.

Its function is as follows. This protein binds to the 23S rRNA, and is important in its secondary structure. It is located near the subunit interface in the base of the L7/L12 stalk, and near the tRNA binding site of the peptidyltransferase center. This chain is Large ribosomal subunit protein uL6, found in Bartonella tribocorum (strain CIP 105476 / IBS 506).